An 824-amino-acid chain; its full sequence is FT-interacting protein 1 (824 aa).

3 C2 domains span residues 48–170, 217–341, and 385–522; these read WLGL…PQWY, VRGE…SRWF, and YISD…THAY. Transmembrane regions (helical) follow at residues 625–645, 657–677, and 764–784; these read AVSLFSGAAAAARWFADVCHW, LLLILVWYPELILPTVFLYMF, and ATCLFVVFCLVAAVVLYVTPF.

This sequence belongs to the MCTP family. In terms of assembly, interacts with RFT1 and PI4KG4. In terms of tissue distribution, specifically expressed in the phloem including companion cells.

It localises to the endoplasmic reticulum membrane. Functionally, involved in the export of the long day-specific flower-promoting signal (florigen) RFT1 from the phloem companion cells to sieve elements. Promotes flowering under long days through the transport of RFT1 from the leaves to the shoot apical meristem (SAM). In Oryza sativa subsp. japonica (Rice), this protein is FT-interacting protein 1.